A 149-amino-acid polypeptide reads, in one-letter code: Large ribosomal subunit protein eL19 (149 aa).

Residues 45 to 130 (VDEGAIQAKD…RDLYDKAGGG (86 aa)) are disordered. The span at 58–85 (NSRGRARERQKKRAYGHQKGAGSRKGKA) shows a compositional bias: basic residues. Positions 90-113 (NSKEDWESRIRAQRTKLRELRDEG) are enriched in basic and acidic residues.

This sequence belongs to the eukaryotic ribosomal protein eL19 family. Part of the 50S ribosomal subunit.

Its function is as follows. Binds to the 23S rRNA. Located at the polypeptide exit tunnel on the outside of the subunit. The protein is Large ribosomal subunit protein eL19 of Haloarcula marismortui (strain ATCC 43049 / DSM 3752 / JCM 8966 / VKM B-1809) (Halobacterium marismortui).